A 379-amino-acid chain; its full sequence is PqqA peptide cyclase (379 aa).

The 213-residue stretch at 8-220 (LPAPIGLLAE…IRVVEEARER (213 aa)) folds into the Radical SAM core domain. [4Fe-4S] cluster-binding residues include cysteine 22, cysteine 26, and cysteine 29.

The protein belongs to the radical SAM superfamily. PqqE family. In terms of assembly, interacts with PqqD. The interaction is necessary for activity of PqqE. It depends on [4Fe-4S] cluster as a cofactor.

The catalysed reaction is [PQQ precursor protein] + S-adenosyl-L-methionine = E-Y cross-linked-[PQQ precursor protein] + 5'-deoxyadenosine + L-methionine + H(+). The protein operates within cofactor biosynthesis; pyrroloquinoline quinone biosynthesis. Catalyzes the cross-linking of a glutamate residue and a tyrosine residue in the PqqA protein as part of the biosynthesis of pyrroloquinoline quinone (PQQ). This Methylobacterium sp. (strain 4-46) protein is PqqA peptide cyclase.